The sequence spans 386 residues: Endonuclease III homolog 2, chloroplastic (386 aa).

The N-terminal 50 residues, 1 to 50 (MILTGAASTFPIVARVLNAMNRRMYAATTLSSAKSISAESLNLRSDSNSE), are a transit peptide targeting the chloroplast. Residues 44–66 (RSDSNSEAAHGASESETRVSLRK) are disordered. One can recognise a HhH domain in the interval 252 to 278 (YDGDIPRTLEELLSLPGVGPKIAHLVL). Catalysis depends on lysine 272, which acts as the Nucleophile; for N-glycosylase activity. [4Fe-4S] cluster-binding residues include cysteine 347, cysteine 354, cysteine 357, and cysteine 363.

It belongs to the Nth/MutY family. It depends on [4Fe-4S] cluster as a cofactor.

Its subcellular location is the plastid. The protein resides in the chloroplast stroma. It localises to the chloroplast nucleoid. The catalysed reaction is 2'-deoxyribonucleotide-(2'-deoxyribose 5'-phosphate)-2'-deoxyribonucleotide-DNA = a 3'-end 2'-deoxyribonucleotide-(2,3-dehydro-2,3-deoxyribose 5'-phosphate)-DNA + a 5'-end 5'-phospho-2'-deoxyribonucleoside-DNA + H(+). Functionally, bifunctional DNA N-glycosylase with associated apurinic/apyrimidinic (AP) lyase function that catalyzes the first step in base excision repair (BER), the primary repair pathway for the repair of oxidative DNA damage. The DNA N-glycosylase activity releases the damaged DNA base from DNA by cleaving the N-glycosidic bond, leaving an AP site. The AP lyase activity cleaves the phosphodiester bond 3' to the AP site by a beta-elimination. Primarily recognizes and repairs oxidative base damage of pyrimidines. This Arabidopsis thaliana (Mouse-ear cress) protein is Endonuclease III homolog 2, chloroplastic (NTH2).